Reading from the N-terminus, the 322-residue chain is Hapalindole dimethylallyltransferase (322 aa).

Dimethylallyl diphosphate is bound by residues arginine 46, arginine 60, lysine 115, asparagine 166, tyrosine 168, arginine 221, tyrosine 225, and lysine 275.

Belongs to the aromatic prenyltransferase family.

The enzyme catalyses hapalindole G + dimethylallyl diphosphate = ambiguine A + diphosphate. It catalyses the reaction hapalindole U + dimethylallyl diphosphate + H(+) = ambiguine H + diphosphate. Its activity is regulated as follows. Activity is slightly increased in the presence of Mg(2+). Functionally, prenyltransferase involved in the biosynthesis of ambiguines, a family of hapalindole-type alkaloids. Catalyzes the reverse prenylation of hapalindole G or U at the C2 position with dimethylallyl diphosphate (DMAPP) to generate ambiguine A or H, respectively. In addition, accepts hapalindole A, an epimer of hapalindole G, and catalyzes normal prenylation at its C2 position. The chain is Hapalindole dimethylallyltransferase from Fischerella ambigua (strain UTEX 1903).